The sequence spans 100 residues: uncharacterized protein (100 aa).

A disordered region spans residues lysine 78–valine 100.

This is an uncharacterized protein from Caenorhabditis elegans.